We begin with the raw amino-acid sequence, 305 residues long: MTDRIAAVKTYLLDLQDRICAALEAEDGKARFAEDAWERPAGGGGRTRVIGDGALIEKGGVNFSHVFGDSLPPSASAHRPELAGRGFQALGVSLVIHPENPHVPTSHANVRFFCAEKAGEEPVWWFGGGFDLTPYYASEEDCVHWHRVARDACAPFGADVYPRYKEWCDRYFHLKHRNEPRGIGGLFFDDLNQWDFDTCFAFIRAIGDAYIDAYLPIVQRRKHTPFDERQREFQAYRRGRYVEFNLVFDRGTLFGLQSGGRTESILMSLPPQVRWGYDWKPEPGSEEARLTEYFLTDRDWLAGQP.

Ser-93 contacts substrate. His-97 and His-107 together coordinate a divalent metal cation. The Proton donor role is filled by His-107. 109–111 provides a ligand contact to substrate; that stretch reads NVR. A divalent metal cation is bound by residues His-146 and His-176. An important for dimerization region spans residues 241–276; that stretch reads YVEFNLVFDRGTLFGLQSGGRTESILMSLPPQVRWG. 259–261 serves as a coordination point for substrate; it reads GGR.

It belongs to the aerobic coproporphyrinogen-III oxidase family. Homodimer. Requires a divalent metal cation as cofactor.

Its subcellular location is the cytoplasm. It carries out the reaction coproporphyrinogen III + O2 + 2 H(+) = protoporphyrinogen IX + 2 CO2 + 2 H2O. It participates in porphyrin-containing compound metabolism; protoporphyrin-IX biosynthesis; protoporphyrinogen-IX from coproporphyrinogen-III (O2 route): step 1/1. Its function is as follows. Involved in the heme biosynthesis. Catalyzes the aerobic oxidative decarboxylation of propionate groups of rings A and B of coproporphyrinogen-III to yield the vinyl groups in protoporphyrinogen-IX. This is Oxygen-dependent coproporphyrinogen-III oxidase from Pseudomonas paraeruginosa (strain DSM 24068 / PA7) (Pseudomonas aeruginosa (strain PA7)).